Consider the following 208-residue polypeptide: Uridine kinase (208 aa).

11 to 18 (GGTGSGKS) contacts ATP.

This sequence belongs to the uridine kinase family.

It is found in the cytoplasm. It catalyses the reaction uridine + ATP = UMP + ADP + H(+). It carries out the reaction cytidine + ATP = CMP + ADP + H(+). It functions in the pathway pyrimidine metabolism; CTP biosynthesis via salvage pathway; CTP from cytidine: step 1/3. The protein operates within pyrimidine metabolism; UMP biosynthesis via salvage pathway; UMP from uridine: step 1/1. The sequence is that of Uridine kinase from Alkaliphilus metalliredigens (strain QYMF).